A 359-amino-acid polypeptide reads, in one-letter code: Carbamoyl phosphate synthase small chain (359 aa).

The segment at 1–169 is CPSase; it reads MTKRILVLED…TKTSYPAPGV (169 aa). Positions 46, 220, and 222 each coordinate L-glutamine. Residues 172 to 358 form the Glutamine amidotransferase type-1 domain; the sequence is SVVLVDFGLK…IEMMEVFKQS (187 aa). Catalysis depends on Cys-247, which acts as the Nucleophile. Met-248, Gln-251, Asn-289, Gly-291, and Tyr-292 together coordinate L-glutamine. Residues His-331 and Asp-333 contribute to the active site.

It belongs to the CarA family. Composed of two chains; the small (or glutamine) chain promotes the hydrolysis of glutamine to ammonia, which is used by the large (or ammonia) chain to synthesize carbamoyl phosphate. Tetramer of heterodimers (alpha,beta)4.

The enzyme catalyses hydrogencarbonate + L-glutamine + 2 ATP + H2O = carbamoyl phosphate + L-glutamate + 2 ADP + phosphate + 2 H(+). The catalysed reaction is L-glutamine + H2O = L-glutamate + NH4(+). Its pathway is amino-acid biosynthesis; L-arginine biosynthesis; carbamoyl phosphate from bicarbonate: step 1/1. It functions in the pathway pyrimidine metabolism; UMP biosynthesis via de novo pathway; (S)-dihydroorotate from bicarbonate: step 1/3. Its function is as follows. Small subunit of the glutamine-dependent carbamoyl phosphate synthetase (CPSase). CPSase catalyzes the formation of carbamoyl phosphate from the ammonia moiety of glutamine, carbonate, and phosphate donated by ATP, constituting the first step of 2 biosynthetic pathways, one leading to arginine and/or urea and the other to pyrimidine nucleotides. The small subunit (glutamine amidotransferase) binds and cleaves glutamine to supply the large subunit with the substrate ammonia. This Streptococcus pneumoniae (strain ATCC BAA-255 / R6) protein is Carbamoyl phosphate synthase small chain.